The chain runs to 462 residues: Cell wall mannoprotein 1 (462 aa).

Residues 1-18 (MKFLSSLVVLGLSAQALA) form the signal peptide. Serine 313 contacts hexadecanoate. The interval 346-429 (FAGTGPAPTT…SVPAAPTGGN (84 aa)) is disordered. The span at 347–366 (AGTGPAPTTSSTPEASTAPA) shows a compositional bias: low complexity. The span at 399–420 (VWPTSTTASPDVQPTITSSGTS) shows a compositional bias: polar residues.

This sequence belongs to the cell wall mannoprotein 1 family. Monomer. Mannoprotein, glycosylated.

The protein localises to the secreted. The protein resides in the cell wall. Functionally, constitutive protein of the cell wall. Binds fatty acids and may thus serve as a fatty acid transporter between P.marneffei and host cells during infection. Abundant antigen target of host humoral immune response. The sequence is that of Cell wall mannoprotein 1 from Talaromyces marneffei (Penicillium marneffei).